A 132-amino-acid chain; its full sequence is Ribosome-binding factor A (132 aa).

The protein belongs to the RbfA family. As to quaternary structure, monomer. Binds 30S ribosomal subunits, but not 50S ribosomal subunits or 70S ribosomes.

It is found in the cytoplasm. In terms of biological role, one of several proteins that assist in the late maturation steps of the functional core of the 30S ribosomal subunit. Associates with free 30S ribosomal subunits (but not with 30S subunits that are part of 70S ribosomes or polysomes). Required for efficient processing of 16S rRNA. May interact with the 5'-terminal helix region of 16S rRNA. The sequence is that of Ribosome-binding factor A from Pseudomonas putida (strain GB-1).